The sequence spans 129 residues: NADH-quinone oxidoreductase subunit 15 (129 aa).

It belongs to the complex I Nqo15 family. In terms of assembly, NDH-1 is composed of 15 different subunits, Nqo1 to Nqo15. The complex has a L-shaped structure, with the hydrophobic arm (subunits Nqo7, Nqo8 and Nqo10 to Nqo14) embedded in the membrane and the hydrophilic peripheral arm (subunits Nqo1 to Nqo6, Nqo9 and Nqo15) protruding into the bacterial cytoplasm. The hydrophilic domain contains all the redox centers. Nqo15 is bound to the side of the complex near the N-terminus of Nqo3, where it interacts with subunits Nqo3, Nqo2, Nqo1, Nqo9 and Nqo4.

It localises to the cell membrane. It catalyses the reaction a quinone + NADH + 5 H(+)(in) = a quinol + NAD(+) + 4 H(+)(out). NDH-1 shuttles electrons from NADH, via FMN and iron-sulfur (Fe-S) centers, to quinones in the respiratory chain. The immediate electron acceptor for the enzyme in this species is menaquinone. Couples the redox reaction to proton translocation (for every two electrons transferred, four hydrogen ions are translocated across the cytoplasmic membrane), and thus conserves the redox energy in a proton gradient required for the synthesis of ATP. The Nqo15 subunit has probably a role in complex stabilization, and may be also involved in the storage of iron for iron-sulfur cluster regeneration in the complex. This Thermus thermophilus (strain ATCC 27634 / DSM 579 / HB8) protein is NADH-quinone oxidoreductase subunit 15 (nqo15).